A 112-amino-acid chain; its full sequence is MEKMRRPVLIIFCLCLGWANGENQVEHSPHFLGPQQGDVASMSCTYSVSRFNNLQWYRQNTGMGPKHLLSMYSAGYEKQKGRLNATLLKNGSSLYITAVQPEDSATYFCAVD.

The signal sequence occupies residues 1–21 (MEKMRRPVLIIFCLCLGWANG). Residues 22–112 (ENQVEHSPHF…DSATYFCAVD (91 aa)) enclose the Ig-like domain. A disulfide bond links Cys-44 and Cys-109. Asn-84 and Asn-90 each carry an N-linked (GlcNAc...) asparagine glycan.

In terms of assembly, alpha-beta TR is a heterodimer composed of an alpha and beta chain; disulfide-linked. The alpha-beta TR is associated with the transmembrane signaling CD3 coreceptor proteins to form the TR-CD3 (TcR or TCR). The assembly of alpha-beta TR heterodimers with CD3 occurs in the endoplasmic reticulum where a single alpha-beta TR heterodimer associates with one CD3D-CD3E heterodimer, one CD3G-CD3E heterodimer and one CD247 homodimer forming a stable octameric structure. CD3D-CD3E and CD3G-CD3E heterodimers preferentially associate with TR alpha and TR beta chains, respectively. The association of the CD247 homodimer is the last step of TcR assembly in the endoplasmic reticulum and is required for transport to the cell surface.

The protein localises to the cell membrane. Functionally, v region of the variable domain of T cell receptor (TR) alpha chain that participates in the antigen recognition. Alpha-beta T cell receptors are antigen specific receptors which are essential to the immune response and are present on the cell surface of T lymphocytes. Recognize peptide-major histocompatibility (MH) (pMH) complexes that are displayed by antigen presenting cells (APC), a prerequisite for efficient T cell adaptive immunity against pathogens. Binding of alpha-beta TR to pMH complex initiates TR-CD3 clustering on the cell surface and intracellular activation of LCK that phosphorylates the ITAM motifs of CD3G, CD3D, CD3E and CD247 enabling the recruitment of ZAP70. In turn ZAP70 phosphorylates LAT, which recruits numerous signaling molecules to form the LAT signalosome. The LAT signalosome propagates signal branching to three major signaling pathways, the calcium, the mitogen-activated protein kinase (MAPK) kinase and the nuclear factor NF-kappa-B (NF-kB) pathways, leading to the mobilization of transcription factors that are critical for gene expression and essential for T cell growth and differentiation. The T cell repertoire is generated in the thymus, by V-(D)-J rearrangement. This repertoire is then shaped by intrathymic selection events to generate a peripheral T cell pool of self-MH restricted, non-autoaggressive T cells. Post-thymic interaction of alpha-beta TR with the pMH complexes shapes TR structural and functional avidity. This is T cell receptor alpha variable 7 from Homo sapiens (Human).